The primary structure comprises 505 residues: Glycerol kinase (505 aa).

Residue T14 participates in ADP binding. 3 residues coordinate ATP: T14, T15, and S16. T14 is a sn-glycerol 3-phosphate binding site. ADP is bound at residue R18. Positions 84, 85, 136, and 246 each coordinate sn-glycerol 3-phosphate. Glycerol is bound by residues R84, E85, Y136, D246, and Q247. Positions 268 and 311 each coordinate ADP. ATP contacts are provided by T268, G311, Q315, and G412. The ADP site is built by G412 and N416.

The protein belongs to the FGGY kinase family.

The enzyme catalyses glycerol + ATP = sn-glycerol 3-phosphate + ADP + H(+). It participates in polyol metabolism; glycerol degradation via glycerol kinase pathway; sn-glycerol 3-phosphate from glycerol: step 1/1. With respect to regulation, inhibited by fructose 1,6-bisphosphate (FBP). Its function is as follows. Key enzyme in the regulation of glycerol uptake and metabolism. Catalyzes the phosphorylation of glycerol to yield sn-glycerol 3-phosphate. This Vibrio campbellii (strain ATCC BAA-1116) protein is Glycerol kinase.